The primary structure comprises 306 residues: Latrophilin receptor-like protein A (306 aa).

Residues 1-15 (MPSQLLNTVLSYLTD) lie on the Extracellular side of the membrane. The helical transmembrane segment at 16-36 (ILLSLSIVGSFLTIFTFMLYP) threads the bilayer. The Cytoplasmic portion of the chain corresponds to 37–41 (KLRSY). A helical membrane pass occupies residues 42–62 (PIKLIIYLCMSIVFSLFFFEI). Over 63 to 70 (SFRSSNSL) the chain is Extracellular. The helical transmembrane segment at 71–91 (FCIPAAILVHYFFLANFFWTF) threads the bilayer. Residues 92–113 (SVSFNFFQMIVKRNRDSEFYER) are Cytoplasmic-facing. A helical transmembrane segment spans residues 114 to 134 (YYHLISWGIPFIIIIFCAAFK). Residues 135 to 152 (KYVDRGGFCYLEDQYSVY) are Extracellular-facing. Residues 153 to 173 (FGFFMPGVIIVCSNICIYVFV) traverse the membrane as a helical segment. Residues 174 to 196 (AKEIYKTLRHTPTQKRQTVKEFR) are Cytoplasmic-facing. A helical transmembrane segment spans residues 197–217 (VYFSIFVSIGSSWIFGFIYMF). The Extracellular segment spans residues 218–222 (SDSNS). Residues 223 to 243 (IIGYIFLILFSISTSLQGFFI) traverse the membrane as a helical segment. The Cytoplasmic segment spans residues 244–306 (FISYCLNYKV…TTTTTNVYSA (63 aa)). A disordered region spans residues 279–306 (TTQSGPTGTTDSSSTMTSTTTTTNVYSA).

Belongs to the G-protein coupled receptor 2 family. LN-TM7 subfamily.

It is found in the membrane. This Dictyostelium discoideum (Social amoeba) protein is Latrophilin receptor-like protein A (lrlA).